Here is a 73-residue protein sequence, read N- to C-terminus: Putative antitoxin VapB18 (73 aa).

The protein belongs to the UPF0330 family.

Its function is as follows. Possibly the antitoxin component of a type II toxin-antitoxin (TA) system. Its cognate toxin is VapC18 (Potential). The polypeptide is Putative antitoxin VapB18 (vapB18) (Archaeoglobus fulgidus (strain ATCC 49558 / DSM 4304 / JCM 9628 / NBRC 100126 / VC-16)).